Reading from the N-terminus, the 683-residue chain is Phosphomethylpyrimidine synthase (683 aa).

Residues Asn235, Met264, Tyr293, His329, 349 to 351, 390 to 393, and Glu429 contribute to the substrate site; these read SRG and DGMR. His433 contributes to the Zn(2+) binding site. A substrate-binding site is contributed by Tyr456. Zn(2+) is bound at residue His497. [4Fe-4S] cluster-binding residues include Cys577, Cys580, and Cys585. The interval 647–683 is disordered; that stretch reads RQSPGVESTSLESTSLESTVLESTSLESTALEKAKEV. Low complexity predominate over residues 653–675; sequence ESTSLESTSLESTVLESTSLEST.

The protein belongs to the ThiC family. As to quaternary structure, homodimer. [4Fe-4S] cluster is required as a cofactor.

It catalyses the reaction 5-amino-1-(5-phospho-beta-D-ribosyl)imidazole + S-adenosyl-L-methionine = 4-amino-2-methyl-5-(phosphooxymethyl)pyrimidine + CO + 5'-deoxyadenosine + formate + L-methionine + 3 H(+). It participates in cofactor biosynthesis; thiamine diphosphate biosynthesis. Catalyzes the synthesis of the hydroxymethylpyrimidine phosphate (HMP-P) moiety of thiamine from aminoimidazole ribotide (AIR) in a radical S-adenosyl-L-methionine (SAM)-dependent reaction. The chain is Phosphomethylpyrimidine synthase from Shewanella loihica (strain ATCC BAA-1088 / PV-4).